The following is a 448-amino-acid chain: Tryptophan dimethylallyltransferase 1 (448 aa).

L-tryptophan-binding positions include 80-81 (IL) and E89. Residues R100, K186, and Y188 each contribute to the substrate site. Residues Y190 and R251 each coordinate L-tryptophan. Residues R264, K266, Y268, Q350, Y352, Y416, and Y420 each contribute to the substrate site.

The protein belongs to the tryptophan dimethylallyltransferase family. Homodimer.

The catalysed reaction is L-tryptophan + dimethylallyl diphosphate = 4-(3-methylbut-2-enyl)-L-tryptophan + diphosphate. Its pathway is alkaloid biosynthesis; ergot alkaloid biosynthesis. In terms of biological role, catalyzes the first step of ergot alkaloid biosynthesis. Ergot alkaloids, which are produced by endophyte fungi, can enhance plant host fitness, but also cause livestock toxicosis to host plants. In Epichloe coenophiala (Tall fescue endophyte fungus), this protein is Tryptophan dimethylallyltransferase 1 (dmaW1).